Reading from the N-terminus, the 485-residue chain is Glycogen synthase (485 aa).

ADP-alpha-D-glucose is bound at residue lysine 15.

It belongs to the glycosyltransferase 1 family. Bacterial/plant glycogen synthase subfamily.

The catalysed reaction is [(1-&gt;4)-alpha-D-glucosyl](n) + ADP-alpha-D-glucose = [(1-&gt;4)-alpha-D-glucosyl](n+1) + ADP + H(+). The protein operates within glycan biosynthesis; glycogen biosynthesis. Synthesizes alpha-1,4-glucan chains using ADP-glucose. The sequence is that of Glycogen synthase from Thermosipho africanus (strain TCF52B).